The sequence spans 144 residues: Histone H2B.2, sperm (144 aa).

Positions 1-51 (MPRSPSKTSPRKGSPRRGSPSRKASPKRGGKGAKRAGKGGRRRNVVRRRRR) are disordered. 5 consecutive short sequence motifs (SPKK motif) follow at residues 4 to 7 (SPSK), 9 to 12 (SPRK), 14 to 17 (SPRR), 19 to 22 (SPSR), and 25 to 28 (SPKR). A phosphoserine mark is found at S14, S19, and S25. The span at 24 to 51 (ASPKRGGKGAKRAGKGGRRRNVVRRRRR) shows a compositional bias: basic residues. A glycan (O-linked (GlcNAc) serine) is linked at S131. K139 participates in a covalent cross-link: Glycyl lysine isopeptide (Lys-Gly) (interchain with G-Cter in ubiquitin).

It belongs to the histone H2B family. In terms of assembly, the nucleosome is a histone octamer containing two molecules each of H2A, H2B, H3 and H4 assembled in one H3-H4 heterotetramer and two H2A-H2B heterodimers. The octamer wraps approximately 147 bp of DNA. Post-translationally, monoubiquitination of Lys-139 gives a specific tag for epigenetic transcriptional activation and is also prerequisite for histone H3 'Lys-4' and 'Lys-79' methylation. In terms of processing, phosphorylated on SPKK motifs 3, 4 and 5; which may regulate DNA binding. Dephosphorylated during maturation of spermatids to mature sperm and rephosphorylated at fertilization. GlcNAcylation at Ser-131 promotes monoubiquitination of Lys-139. It fluctuates in response to extracellular glucose, and associates with transcribed genes.

The protein localises to the nucleus. It localises to the chromosome. In terms of biological role, core component of nucleosome. Nucleosomes wrap and compact DNA into chromatin, limiting DNA accessibility to the cellular machineries which require DNA as a template. Histones thereby play a central role in transcription regulation, DNA repair, DNA replication and chromosomal stability. DNA accessibility is regulated via a complex set of post-translational modifications of histones, also called histone code, and nucleosome remodeling. The polypeptide is Histone H2B.2, sperm (Strongylocentrotus purpuratus (Purple sea urchin)).